A 379-amino-acid polypeptide reads, in one-letter code: Cytochrome b (379 aa).

A run of 4 helical transmembrane segments spans residues 33–53 (FGSL…FLAM), 77–98 (WLIR…FIHV), 113–133 (WNIG…GYVL), and 178–198 (FFAF…VHLL). The heme b site is built by His-83 and His-97. Heme b contacts are provided by His-182 and His-196. Residue His-201 participates in a ubiquinone binding. Helical transmembrane passes span 226–246 (IKDL…ALFF), 288–308 (LGGV…PLLN), 320–340 (ITQT…WIGG), and 347–367 (FTMI…ILMP).

Belongs to the cytochrome b family. The cytochrome bc1 complex contains 11 subunits: 3 respiratory subunits (MT-CYB, CYC1 and UQCRFS1), 2 core proteins (UQCRC1 and UQCRC2) and 6 low-molecular weight proteins (UQCRH/QCR6, UQCRB/QCR7, UQCRQ/QCR8, UQCR10/QCR9, UQCR11/QCR10 and a cleavage product of UQCRFS1). This cytochrome bc1 complex then forms a dimer. Heme b is required as a cofactor.

It is found in the mitochondrion inner membrane. Component of the ubiquinol-cytochrome c reductase complex (complex III or cytochrome b-c1 complex) that is part of the mitochondrial respiratory chain. The b-c1 complex mediates electron transfer from ubiquinol to cytochrome c. Contributes to the generation of a proton gradient across the mitochondrial membrane that is then used for ATP synthesis. The chain is Cytochrome b (MT-CYB) from Akodon dolores (Dolorous grass mouse).